A 383-amino-acid chain; its full sequence is UDP-N-acetylglucosamine--N-acetylmuramyl-(pentapeptide) pyrophosphoryl-undecaprenol N-acetylglucosamine transferase (383 aa).

Residues 10 to 12 (TGG), Asn124, Arg165, Ser190, Ile245, and Gln290 each bind UDP-N-acetyl-alpha-D-glucosamine. Residues 364–383 (PFGQAREPGQKPARPPDLAS) are disordered.

The protein belongs to the glycosyltransferase 28 family. MurG subfamily.

The protein localises to the cell inner membrane. It carries out the reaction di-trans,octa-cis-undecaprenyl diphospho-N-acetyl-alpha-D-muramoyl-L-alanyl-D-glutamyl-meso-2,6-diaminopimeloyl-D-alanyl-D-alanine + UDP-N-acetyl-alpha-D-glucosamine = di-trans,octa-cis-undecaprenyl diphospho-[N-acetyl-alpha-D-glucosaminyl-(1-&gt;4)]-N-acetyl-alpha-D-muramoyl-L-alanyl-D-glutamyl-meso-2,6-diaminopimeloyl-D-alanyl-D-alanine + UDP + H(+). Its pathway is cell wall biogenesis; peptidoglycan biosynthesis. Functionally, cell wall formation. Catalyzes the transfer of a GlcNAc subunit on undecaprenyl-pyrophosphoryl-MurNAc-pentapeptide (lipid intermediate I) to form undecaprenyl-pyrophosphoryl-MurNAc-(pentapeptide)GlcNAc (lipid intermediate II). This chain is UDP-N-acetylglucosamine--N-acetylmuramyl-(pentapeptide) pyrophosphoryl-undecaprenol N-acetylglucosamine transferase, found in Anaeromyxobacter sp. (strain K).